The sequence spans 561 residues: Arginine--tRNA ligase (561 aa).

A 'HIGH' region motif is present at residues 129–139 (ANPTGPLHIGH).

The protein belongs to the class-I aminoacyl-tRNA synthetase family. In terms of assembly, monomer.

The protein resides in the cytoplasm. It catalyses the reaction tRNA(Arg) + L-arginine + ATP = L-arginyl-tRNA(Arg) + AMP + diphosphate. The polypeptide is Arginine--tRNA ligase (Geotalea uraniireducens (strain Rf4) (Geobacter uraniireducens)).